The chain runs to 154 residues: Endoribonuclease YbeY (154 aa).

Positions 120, 124, and 130 each coordinate Zn(2+).

This sequence belongs to the endoribonuclease YbeY family. Zn(2+) is required as a cofactor.

It localises to the cytoplasm. In terms of biological role, single strand-specific metallo-endoribonuclease involved in late-stage 70S ribosome quality control and in maturation of the 3' terminus of the 16S rRNA. This Oceanobacillus iheyensis (strain DSM 14371 / CIP 107618 / JCM 11309 / KCTC 3954 / HTE831) protein is Endoribonuclease YbeY.